A 126-amino-acid polypeptide reads, in one-letter code: Cytochrome c2 (126 aa).

4 residues coordinate heme c: C17, C20, H21, and M101.

It belongs to the cytochrome c family. In terms of processing, binds 1 heme c group covalently per subunit.

It localises to the periplasm. In terms of biological role, cytochrome c2 is found mainly in purple, non-sulfur, photosynthetic bacteria where it functions as the electron donor to the oxidized bacteriochlorophyll in the photophosphorylation pathway. However, it may also have a role in the respiratory chain and is found in some non-photosynthetic bacteria. The chain is Cytochrome c2 from Rhodovulum adriaticum (Rhodopseudomonas adriatica).